Here is a 125-residue protein sequence, read N- to C-terminus: Small ribosomal subunit protein uS13 (125 aa).

The segment at 95–125 (GLPVNGQRTRTNARTRKGVKKTVANKKKATK) is disordered. Positions 105–125 (TNARTRKGVKKTVANKKKATK) are enriched in basic residues.

Belongs to the universal ribosomal protein uS13 family. As to quaternary structure, part of the 30S ribosomal subunit. Forms a loose heterodimer with protein S19. Forms two bridges to the 50S subunit in the 70S ribosome.

Located at the top of the head of the 30S subunit, it contacts several helices of the 16S rRNA. In the 70S ribosome it contacts the 23S rRNA (bridge B1a) and protein L5 of the 50S subunit (bridge B1b), connecting the 2 subunits; these bridges are implicated in subunit movement. Contacts the tRNAs in the A and P-sites. The chain is Small ribosomal subunit protein uS13 from Leptospira biflexa serovar Patoc (strain Patoc 1 / Ames).